The chain runs to 357 residues: Putative F-box protein At5g50220 (357 aa).

An F-box domain is found at Ile27–Ser73.

The polypeptide is Putative F-box protein At5g50220 (Arabidopsis thaliana (Mouse-ear cress)).